Here is a 455-residue protein sequence, read N- to C-terminus: Tubulin alpha chain (455 aa).

The GTP site is built by Gln-11, Glu-77, Ser-145, Gly-149, Thr-150, Ser-184, Asn-211, and Asn-233. Glu-77 lines the Mg(2+) pocket. Glu-259 is an active-site residue.

This sequence belongs to the tubulin family. In terms of assembly, dimer of alpha and beta chains. A typical microtubule is a hollow water-filled tube with an outer diameter of 25 nm and an inner diameter of 15 nM. Alpha-beta heterodimers associate head-to-tail to form protofilaments running lengthwise along the microtubule wall with the beta-tubulin subunit facing the microtubule plus end conferring a structural polarity. Microtubules usually have 13 protofilaments but different protofilament numbers can be found in some organisms and specialized cells. It depends on Mg(2+) as a cofactor.

It is found in the cytoplasm. The protein localises to the cytoskeleton. The enzyme catalyses GTP + H2O = GDP + phosphate + H(+). Functionally, tubulin is the major constituent of microtubules, a cylinder consisting of laterally associated linear protofilaments composed of alpha- and beta-tubulin heterodimers. Microtubules grow by the addition of GTP-tubulin dimers to the microtubule end, where a stabilizing cap forms. Below the cap, tubulin dimers are in GDP-bound state, owing to GTPase activity of alpha-tubulin. The protein is Tubulin alpha chain of Entamoeba histolytica (strain ATCC 30459 / HM-1:IMSS / ABRM).